The following is a 727-amino-acid chain: Prolyl endopeptidase-like (727 aa).

At Met1 the chain carries N-acetylmethionine. Active-site charge relay system residues include Ser559, Asp645, and His690.

This sequence belongs to the peptidase S9A family. Homodimer. Interacts with the AP-1 complex. Expressed in pyramidal neurons of the temporal cortex and neocortex (at protein level). Widely expressed. Expressed at higher level in brain, skeletal muscle, heart and kidney. Expressed at the endplates in the neuromuscular junction.

It localises to the cytoplasm. The protein localises to the cytosol. Its subcellular location is the golgi apparatus. The protein resides in the trans-Golgi network. It is found in the cytoskeleton. It localises to the nucleus. Its activity is regulated as follows. Inhibited by PMSF and Prefabloc, as well as leupeptin at high concentrations. Partially inhibited by TPCK, a chymotrypsin inhibitor and E64, a cysteine protease inhibitor. Not affected by 4-amidinophenyl-methanesulfonyl fluoride (APMSF), pepstatin or EDTA. Inhibited by 1-isobutyl-3-oxo-3,5,6,7-tetrahydro-2H-cyclopenta[c]pyridine-4-carbonitrile. Functionally, serine peptidase whose precise substrate specificity remains unclear. Does not cleave peptides after a arginine or lysine residue. Regulates trans-Golgi network morphology and sorting by regulating the membrane binding of the AP-1 complex. May play a role in the regulation of synaptic vesicle exocytosis. This chain is Prolyl endopeptidase-like (PREPL), found in Homo sapiens (Human).